A 66-amino-acid chain; its full sequence is Potassium channel toxin alpha-KTx 27.3 (66 aa).

Positions 1 to 17 (MKLMWLLFLCVLAFSIA) are cleaved as a signal peptide.

It belongs to the short scorpion toxin superfamily. Potassium channel inhibitor family. Alpha-KTx 27 subfamily. Contains 4 disulfide bonds. Expressed by the venom gland.

It is found in the secreted. The polypeptide is Potassium channel toxin alpha-KTx 27.3 (Lychas mucronatus (Chinese swimming scorpion)).